Reading from the N-terminus, the 740-residue chain is Ethylene receptor 1 (740 aa).

The next 3 membrane-spanning stretches (helical) occupy residues 23–43 (ISDFFIALAYFSIPLELIYFV), 53–73 (WVLVQFGAFIVLCGATHLINL), and 92–112 (VLTAVVSCATALMLVHIIPDL). Cu cation contacts are provided by Cys65 and His69. Positions 158-307 (DRHTILKTTL…VVADQVAVAL (150 aa)) constitute a GAF domain. The Histidine kinase domain maps to 350–588 (VMNHEMRTPM…TFIVKLGIAE (239 aa)). His353 bears the Phosphohistidine; by autocatalysis mark. The region spanning 614–731 (KVLVMDDNGV…KMRSVLSELI (118 aa)) is the Response regulatory domain. Asp662 is modified (4-aspartylphosphate).

This sequence belongs to the ethylene receptor family. In terms of assembly, homodimer; disulfide-linked. Requires Cu cation as cofactor. Activation probably requires a transfer of a phosphate group between a His in the transmitter domain and an Asp of the receiver domain.

It is found in the endoplasmic reticulum membrane. It catalyses the reaction ATP + protein L-histidine = ADP + protein N-phospho-L-histidine.. May act early in the ethylene signal transduction pathway, possibly as an ethylene receptor, or as a regulator of the pathway. This is Ethylene receptor 1 (ETR1) from Cucumis sativus (Cucumber).